The following is a 346-amino-acid chain: Hydroxymethylglutaryl-CoA synthase (346 aa).

Residue aspartate 28 coordinates (3S)-3-hydroxy-3-methylglutaryl-CoA. Residue glutamate 80 is the Proton donor/acceptor of the active site. Cysteine 112 and threonine 153 together coordinate (3S)-3-hydroxy-3-methylglutaryl-CoA. The Acyl-thioester intermediate role is filled by cysteine 112. Arginine 199 provides a ligand contact to CoA. Residues threonine 201 and histidine 234 each contribute to the (3S)-3-hydroxy-3-methylglutaryl-CoA site. Histidine 234 (proton donor/acceptor) is an active-site residue. Lysine 239 provides a ligand contact to CoA. Residues lysine 243, asparagine 266, and serine 296 each coordinate (3S)-3-hydroxy-3-methylglutaryl-CoA.

It belongs to the thiolase-like superfamily. Archaeal HMG-CoA synthase family. As to quaternary structure, interacts with acetoacetyl-CoA thiolase that catalyzes the precedent step in the pathway and with a DUF35 protein. The acetoacetyl-CoA thiolase/HMG-CoA synthase complex channels the intermediate via a fused CoA-binding site, which allows for efficient coupling of the endergonic thiolase reaction with the exergonic HMGCS reaction.

The catalysed reaction is acetoacetyl-CoA + acetyl-CoA + H2O = (3S)-3-hydroxy-3-methylglutaryl-CoA + CoA + H(+). It functions in the pathway metabolic intermediate biosynthesis; (R)-mevalonate biosynthesis; (R)-mevalonate from acetyl-CoA: step 2/3. Catalyzes the condensation of acetyl-CoA with acetoacetyl-CoA to form 3-hydroxy-3-methylglutaryl-CoA (HMG-CoA). Functions in the mevalonate (MVA) pathway leading to isopentenyl diphosphate (IPP), a key precursor for the biosynthesis of isoprenoid compounds that are building blocks of archaeal membrane lipids. This Methanothermobacter thermautotrophicus (strain ATCC 29096 / DSM 1053 / JCM 10044 / NBRC 100330 / Delta H) (Methanobacterium thermoautotrophicum) protein is Hydroxymethylglutaryl-CoA synthase.